A 419-amino-acid chain; its full sequence is S-adenosylmethionine synthase (419 aa).

Residue His-15 participates in ATP binding. Asp-17 lines the Mg(2+) pocket. Glu-43 lines the K(+) pocket. Residues Glu-56 and Gln-100 each contribute to the L-methionine site. Residues 100-110 (QSPDIAQGVNE) are flexible loop. Residues 171-173 (DGK), 248-249 (KF), Asp-257, 263-264 (RK), Ala-280, and Lys-284 contribute to the ATP site. Residue Asp-257 participates in L-methionine binding. Lys-288 is an L-methionine binding site.

Belongs to the AdoMet synthase family. In terms of assembly, homotetramer; dimer of dimers. Mg(2+) serves as cofactor. The cofactor is K(+).

The protein localises to the cytoplasm. It catalyses the reaction L-methionine + ATP + H2O = S-adenosyl-L-methionine + phosphate + diphosphate. Its pathway is amino-acid biosynthesis; S-adenosyl-L-methionine biosynthesis; S-adenosyl-L-methionine from L-methionine: step 1/1. Its function is as follows. Catalyzes the formation of S-adenosylmethionine (AdoMet) from methionine and ATP. The overall synthetic reaction is composed of two sequential steps, AdoMet formation and the subsequent tripolyphosphate hydrolysis which occurs prior to release of AdoMet from the enzyme. This chain is S-adenosylmethionine synthase, found in Prochlorococcus marinus (strain MIT 9313).